The sequence spans 448 residues: Putative diacyglycerol O-acyltransferase MT3848 (448 aa).

The active-site Proton acceptor is the His136.

Belongs to the long-chain O-acyltransferase family.

The enzyme catalyses an acyl-CoA + a 1,2-diacyl-sn-glycerol = a triacyl-sn-glycerol + CoA. It participates in glycerolipid metabolism; triacylglycerol biosynthesis. In Mycobacterium tuberculosis (strain CDC 1551 / Oshkosh), this protein is Putative diacyglycerol O-acyltransferase MT3848.